The following is a 716-amino-acid chain: Translation initiation factor IF-2 (716 aa).

The segment at 53–135 is disordered; the sequence is GGAGVTSQKP…PLKPKKELPE (83 aa). Polar residues predominate over residues 57–83; the sequence is VTSQKPAETNKNKPQGINQQPAGNQPN. The segment covering 93 to 109 has biased composition (low complexity); sequence VQNNQFNKNKKNNNNNK. One can recognise a tr-type G domain in the interval 217-386; it reads IRPPVVTIMG…LLVSEVEELK (170 aa). The interval 226-233 is G1; the sequence is GHVDHGKT. Residue 226–233 coordinates GTP; sequence GHVDHGKT. The segment at 251–255 is G2; that stretch reads GITQH. The G3 stretch occupies residues 272-275; the sequence is DTPG. Residues 272 to 276 and 326 to 329 contribute to the GTP site; these read DTPGH and NKVD. A G4 region spans residues 326-329; that stretch reads NKVD. Residues 362–364 form a G5 region; that stretch reads SAL.

It belongs to the TRAFAC class translation factor GTPase superfamily. Classic translation factor GTPase family. IF-2 subfamily.

It is found in the cytoplasm. In terms of biological role, one of the essential components for the initiation of protein synthesis. Protects formylmethionyl-tRNA from spontaneous hydrolysis and promotes its binding to the 30S ribosomal subunits. Also involved in the hydrolysis of GTP during the formation of the 70S ribosomal complex. The chain is Translation initiation factor IF-2 from Bacillus velezensis (strain DSM 23117 / BGSC 10A6 / LMG 26770 / FZB42) (Bacillus amyloliquefaciens subsp. plantarum).